A 380-amino-acid chain; its full sequence is G-protein coupled receptor (380 aa).

7 consecutive transmembrane segments (helical) span residues 26–46 (VISIFSLTTFVGLAITLYLGI), 60–80 (LVCCDVLIVNAVCLITLPLWV), 97–117 (FAGMFYTMNVYMSVWSCVIVT), 145–165 (VTILTLLVTFIGLFSLTETSI), 184–204 (AALGYTVPWLAIAIMIVHIIL), 220–240 (ILMWMMFTLLVTQGPYYSLSA), and 275–295 (VAMLVCTHALAITRMFSVPLI). Cys-95 and Cys-170 are oxidised to a cystine. The disordered stretch occupies residues 328–380 (SQSKLLRGEENPNYDYSPKSVRIKPLKSPGGGDNSSLKDEGYDEESQNGFSIG).

This sequence belongs to the G-protein coupled receptor 1 family.

The protein resides in the host membrane. This Elephas maximus (Indian elephant) protein is G-protein coupled receptor.